Consider the following 558-residue polypeptide: Glutamine--tRNA ligase (558 aa).

The 'HIGH' region motif lies at 34 to 44 (PEPNGYLHIGH). ATP is bound by residues 35 to 37 (EPN) and 41 to 47 (HIGHAKS). The L-glutamine site is built by aspartate 67 and tyrosine 212. ATP-binding positions include threonine 231, 261–262 (RL), and 269–271 (LSK). Positions 268-272 (VLSKR) match the 'KMSKS' region motif.

This sequence belongs to the class-I aminoacyl-tRNA synthetase family. As to quaternary structure, monomer.

Its subcellular location is the cytoplasm. The enzyme catalyses tRNA(Gln) + L-glutamine + ATP = L-glutaminyl-tRNA(Gln) + AMP + diphosphate. The protein is Glutamine--tRNA ligase of Pseudoalteromonas atlantica (strain T6c / ATCC BAA-1087).